Here is a 518-residue protein sequence, read N- to C-terminus: Transcription factor TT8 (518 aa).

Coiled-coil stretches lie at residues 220-240 (EVHEEAEDEEEVEEEMTMSEE) and 405-428 (VNHLRKRVHELENTHHEQQHKRTR). Positions 359–408 (REDLSHVVAERRRREKLNEKFITLRSMVPFVTKMDKVSILGDTIAYVNHL) constitute a bHLH domain.

It belongs to the bHLH protein family. In terms of assembly, homodimer. Interacts with MYB4, MYB5, MYB6, MYB82, MYB113, MYB114, MYB75/PAP1, MYB90/PAP2, and TT2. In terms of tissue distribution, buds, flowers and developing siliques, but not in leaves, stems and roots.

Its subcellular location is the nucleus. Transcription activator, when associated with MYB75/PAP1 or MYB90/PAP2. Involved in the control of flavonoid pigmentation. Plays a key role in regulating leucoanthocyanidin reductase (BANYULS) and dihydroflavonol-4-reductase (DFR). Not required for leucoanthocyanidin dioxygenase (LDOX) expression. The chain is Transcription factor TT8 from Arabidopsis thaliana (Mouse-ear cress).